The chain runs to 110 residues: MTEHNHDSQLEINNEEELLTLYDEEGNEVLYRKVLEFFHPEFKKEYVILAEEGAESDDDDLIELVPMINEPDENGEGGKFLPVETDEEWDMIEEVVNTEMDDHDHDHDHE.

Belongs to the UPF0473 family.

The polypeptide is UPF0473 protein SSP1146 (Staphylococcus saprophyticus subsp. saprophyticus (strain ATCC 15305 / DSM 20229 / NCIMB 8711 / NCTC 7292 / S-41)).